We begin with the raw amino-acid sequence, 450 residues long: Saccharopine dehydrogenase [NADP(+), L-glutamate-forming] (450 aa).

NADP(+)-binding positions include 9-12, 32-34, 54-55, Ile-75, 97-98, 124-126, and Ser-174; these read SGFV, CRT, DV, TS, and VDP. L-saccharopine is bound by residues 98 to 99 and Asp-125; that span reads SY. L-saccharopine contacts are provided by residues Arg-223 and 244 to 246; that span reads TLR.

The protein belongs to the saccharopine dehydrogenase family. In terms of assembly, homodimer.

The protein localises to the cytoplasm. It carries out the reaction L-saccharopine + NADP(+) + H2O = (S)-2-amino-6-oxohexanoate + L-glutamate + NADPH + H(+). It participates in amino-acid biosynthesis; L-lysine biosynthesis via AAA pathway; L-lysine from L-alpha-aminoadipate (fungal route): step 2/3. In Schizosaccharomyces pombe (strain 972 / ATCC 24843) (Fission yeast), this protein is Saccharopine dehydrogenase [NADP(+), L-glutamate-forming].